A 120-amino-acid polypeptide reads, in one-letter code: Peptidyl-tRNA hydrolase (120 aa).

It belongs to the PTH2 family.

It is found in the cytoplasm. It carries out the reaction an N-acyl-L-alpha-aminoacyl-tRNA + H2O = an N-acyl-L-amino acid + a tRNA + H(+). The natural substrate for this enzyme may be peptidyl-tRNAs which drop off the ribosome during protein synthesis. This chain is Peptidyl-tRNA hydrolase, found in Pyrobaculum aerophilum (strain ATCC 51768 / DSM 7523 / JCM 9630 / CIP 104966 / NBRC 100827 / IM2).